The sequence spans 174 residues: Nucleoside-triphosphatase THEP1 (174 aa).

Residues 7-14 (GRPGVGKT) and 94-101 (LIIIDEIG) contribute to the ATP site.

This sequence belongs to the THEP1 NTPase family.

The enzyme catalyses a ribonucleoside 5'-triphosphate + H2O = a ribonucleoside 5'-diphosphate + phosphate + H(+). Its function is as follows. Has nucleotide phosphatase activity towards ATP, GTP, CTP, TTP and UTP. May hydrolyze nucleoside diphosphates with lower efficiency. The chain is Nucleoside-triphosphatase THEP1 from Thermotoga sp. (strain RQ2).